The chain runs to 356 residues: tRNA N6-adenosine threonylcarbamoyltransferase (356 aa).

2 residues coordinate Fe cation: histidine 115 and histidine 119. Substrate contacts are provided by residues 138–142 (LVSGG), aspartate 171, glycine 184, and asparagine 283. Aspartate 311 contributes to the Fe cation binding site.

It belongs to the KAE1 / TsaD family. It depends on Fe(2+) as a cofactor.

It localises to the cytoplasm. The enzyme catalyses L-threonylcarbamoyladenylate + adenosine(37) in tRNA = N(6)-L-threonylcarbamoyladenosine(37) in tRNA + AMP + H(+). Its function is as follows. Required for the formation of a threonylcarbamoyl group on adenosine at position 37 (t(6)A37) in tRNAs that read codons beginning with adenine. Is involved in the transfer of the threonylcarbamoyl moiety of threonylcarbamoyl-AMP (TC-AMP) to the N6 group of A37, together with TsaE and TsaB. TsaD likely plays a direct catalytic role in this reaction. In Prochlorococcus marinus (strain MIT 9301), this protein is tRNA N6-adenosine threonylcarbamoyltransferase.